Consider the following 31-residue polypeptide: Delta-actitoxin-Dar1b (31 aa).

The protein belongs to the sea anemone short toxin (type III) family. Post-translationally, contains 4 disulfide bonds.

The protein localises to the secreted. It localises to the nematocyst. Binds specifically to voltage-gated sodium channels (Nav), thereby delaying their inactivation during signal transduction. This chain is Delta-actitoxin-Dar1b, found in Dofleinia armata (Armed anemone).